We begin with the raw amino-acid sequence, 422 residues long: Metallocarboxypeptidase A (422 aa).

A signal peptide spans 1 to 17; it reads MRSVLSFALLAANVVSA. The propeptide at 18-112 is activation peptide; sequence AVLAPFDYSG…FEAYSAGYAP (95 aa). A Peptidase M14 domain is found at 119–419; it reads SYHSYQDHLS…AGTVAMLKAV (301 aa). Zn(2+)-binding residues include histidine 179 and glutamate 182. Substrate contacts are provided by residues 179–182, arginine 237, and 254–255; these read HARE and NR. A disulfide bond links cysteine 248 and cysteine 271. Histidine 309 is a binding site for Zn(2+). A substrate-binding site is contributed by 310–311; it reads SY. Glutamate 385 (proton donor/acceptor) is an active-site residue.

This sequence belongs to the peptidase M14 family. Requires Zn(2+) as cofactor.

It is found in the secreted. Extracellular metalloprotease that contributes to pathogenicity. This Arthroderma otae (strain ATCC MYA-4605 / CBS 113480) (Microsporum canis) protein is Metallocarboxypeptidase A (MCPA).